The following is a 241-amino-acid chain: Spiralin (241 aa).

The N-terminal stretch at 1 to 23 (MKKLLSILAVFGVSAVGTTSVVA) is a signal peptide. The N-palmitoyl cysteine moiety is linked to residue Cys-24. Cys-24 is lipidated: S-diacylglycerol cysteine.

This sequence belongs to the spiralin family. As to quaternary structure, seems to occur as dimer, tetramers, and large oligomers of identical chains. Palmitate and stearate are the major lipid components.

It localises to the cell membrane. In terms of biological role, major membrane protein of spiroplasma. This is Spiralin (spi) from Spiroplasma citri.